Consider the following 389-residue polypeptide: Inner membrane transport protein YdhP (389 aa).

At 1–6 (MKINYP) the chain is on the cytoplasmic side. The helical transmembrane segment at 7–27 (LLALAIGAFGIGTTEFSPMGL) threads the bilayer. At 28–43 (LPVIARGVDVSIPAAG) the chain is on the periplasmic side. Residues 44 to 64 (MLISAYAVGVMVGAPLMTLLL) traverse the membrane as a helical segment. Residues 65–70 (SHRARR) are Cytoplasmic-facing. The helical transmembrane segment at 71–91 (SALIFLMAIFTLGNVLSAIAP) threads the bilayer. Residues 92 to 100 (DYMTLMLSR) are Periplasmic-facing. A helical membrane pass occupies residues 101 to 121 (ILTSLNHGAFFGLGSVVAASV). Residues 122 to 130 (VPKHKQASA) are Cytoplasmic-facing. The chain crosses the membrane as a helical span at residues 131 to 151 (VATMFMGLTLANIGGVPAATW). The Periplasmic portion of the chain corresponds to 152–159 (LGETIGWR). Residues 160–180 (MSFLATAGLGVISMVSLFFSL) traverse the membrane as a helical segment. Residues 181–203 (PKGGAGARPEVKKELAVLMRPQV) lie on the Cytoplasmic side of the membrane. The chain crosses the membrane as a helical span at residues 204–224 (LSALLTTVLGAGAMFTLYTYI). The Periplasmic segment spans residues 225-236 (SPVLQSITHATP). The chain crosses the membrane as a helical span at residues 237-257 (VFVTAMLVLIGVGFSIGNYLG). Residues 258-266 (GKLADRSVN) are Cytoplasmic-facing. The chain crosses the membrane as a helical span at residues 267–287 (GTLKGFLLLLMVIMLAIPFLA). Residues 288–290 (RNK) lie on the Periplasmic side of the membrane. Residues 291 to 311 (FGAAISMAVWGAATFAVVPPL) form a helical membrane-spanning segment. Residues 312–330 (QMRVMRVASEAPGLSSSVN) are Cytoplasmic-facing. A helical membrane pass occupies residues 331-351 (IGAFNLGNALGAAAGGAVISA). Topologically, residues 352 to 356 (GLGYS) are periplasmic. Residues 357 to 377 (FVPVMGAIVAGLALLLVFMSA) form a helical membrane-spanning segment. Over 378–389 (RKQPETVCVANS) the chain is Cytoplasmic.

It belongs to the major facilitator superfamily.

The protein resides in the cell inner membrane. The chain is Inner membrane transport protein YdhP (ydhP) from Escherichia coli O157:H7.